The sequence spans 684 residues: ATP-dependent zinc metalloprotease FtsH (684 aa).

Residues 1-21 (MENKNDMFNKTPKSGKPKMFR) are Cytoplasmic-facing. A helical membrane pass occupies residues 22-42 (FNLYWMYGLIFIMLVALYMTN). The Periplasmic segment spans residues 43-138 (DSSGTKELGW…QVRFEEGDDA (96 aa)). The helical transmembrane segment at 139 to 159 (IWNFLVSFGPIILLIGVWMFL) threads the bilayer. The Cytoplasmic portion of the chain corresponds to 160–684 (MRRMSGGTGA…TEENKTGKIA (525 aa)). 236–243 (GPPGTGKT) contributes to the ATP binding site. H459 contacts Zn(2+). The active site involves E460. The Zn(2+) site is built by H463 and D534. Residues 647 to 662 (EKANGKNKENADKEAE) are compositionally biased toward basic and acidic residues. The tract at residues 647–684 (EKANGKNKENADKEAEADATTENVTDTPTEENKTGKIA) is disordered.

It in the central section; belongs to the AAA ATPase family. The protein in the C-terminal section; belongs to the peptidase M41 family. As to quaternary structure, homohexamer. Zn(2+) serves as cofactor.

The protein resides in the cell inner membrane. Functionally, acts as a processive, ATP-dependent zinc metallopeptidase for both cytoplasmic and membrane proteins. Plays a role in the quality control of integral membrane proteins. The protein is ATP-dependent zinc metalloprotease FtsH of Parabacteroides distasonis (strain ATCC 8503 / DSM 20701 / CIP 104284 / JCM 5825 / NCTC 11152).